The chain runs to 418 residues: Histidine--tRNA ligase (418 aa).

This sequence belongs to the class-II aminoacyl-tRNA synthetase family. Homodimer.

Its subcellular location is the cytoplasm. The catalysed reaction is tRNA(His) + L-histidine + ATP = L-histidyl-tRNA(His) + AMP + diphosphate + H(+). The sequence is that of Histidine--tRNA ligase from Dehalococcoides mccartyi (strain ATCC BAA-2266 / KCTC 15142 / 195) (Dehalococcoides ethenogenes (strain 195)).